The chain runs to 205 residues: Outer-membrane lipoprotein carrier protein (205 aa).

Positions 1-19 (MKKIIICFIFVFSINISFA) are cleaved as a signal peptide.

This sequence belongs to the LolA family. In terms of assembly, monomer.

The protein localises to the periplasm. In terms of biological role, participates in the translocation of lipoproteins from the inner membrane to the outer membrane. Only forms a complex with a lipoprotein if the residue after the N-terminal Cys is not an aspartate (The Asp acts as a targeting signal to indicate that the lipoprotein should stay in the inner membrane). This is Outer-membrane lipoprotein carrier protein from Francisella tularensis subsp. novicida (strain U112).